Here is a 339-residue protein sequence, read N- to C-terminus: Glutamyl-tRNA reductase (339 aa).

Substrate-binding positions include 50 to 53 (TCHR), Ser102, 107 to 109 (ETE), and Gln113. Cys51 (nucleophile) is an active-site residue. 181–186 (GYSDIN) serves as a coordination point for NADP(+).

Belongs to the glutamyl-tRNA reductase family. As to quaternary structure, homodimer.

It catalyses the reaction (S)-4-amino-5-oxopentanoate + tRNA(Glu) + NADP(+) = L-glutamyl-tRNA(Glu) + NADPH + H(+). The protein operates within porphyrin-containing compound metabolism; protoporphyrin-IX biosynthesis; 5-aminolevulinate from L-glutamyl-tRNA(Glu): step 1/2. In terms of biological role, catalyzes the NADPH-dependent reduction of glutamyl-tRNA(Glu) to glutamate 1-semialdehyde (GSA). The polypeptide is Glutamyl-tRNA reductase (Chlamydia pneumoniae (Chlamydophila pneumoniae)).